The sequence spans 173 residues: Ribosome maturation factor RimM (173 aa).

The 74-residue stretch at 92–165 (EGEFYHADLI…RVVIEMPGEI (74 aa)) folds into the PRC barrel domain.

The protein belongs to the RimM family. In terms of assembly, binds ribosomal protein uS19.

It is found in the cytoplasm. Functionally, an accessory protein needed during the final step in the assembly of 30S ribosomal subunit, possibly for assembly of the head region. Essential for efficient processing of 16S rRNA. May be needed both before and after RbfA during the maturation of 16S rRNA. It has affinity for free ribosomal 30S subunits but not for 70S ribosomes. The chain is Ribosome maturation factor RimM from Nitrobacter hamburgensis (strain DSM 10229 / NCIMB 13809 / X14).